The sequence spans 84 residues: Small ribosomal subunit protein uS17 (84 aa).

It belongs to the universal ribosomal protein uS17 family. Part of the 30S ribosomal subunit.

Its function is as follows. One of the primary rRNA binding proteins, it binds specifically to the 5'-end of 16S ribosomal RNA. The chain is Small ribosomal subunit protein uS17 from Borrelia hermsii (strain HS1 / DAH).